The following is a 141-amino-acid chain: uncharacterized protein (141 aa).

The MaoC-like domain maps to 8–112; it reads IGQVFKTKSL…VLDKQPKRNE (105 aa).

This is an uncharacterized protein from Bacillus subtilis (strain 168).